Here is a 351-residue protein sequence, read N- to C-terminus: S-adenosylmethionine:tRNA ribosyltransferase-isomerase (351 aa).

This sequence belongs to the QueA family. Monomer.

Its subcellular location is the cytoplasm. It carries out the reaction 7-aminomethyl-7-carbaguanosine(34) in tRNA + S-adenosyl-L-methionine = epoxyqueuosine(34) in tRNA + adenine + L-methionine + 2 H(+). Its pathway is tRNA modification; tRNA-queuosine biosynthesis. Transfers and isomerizes the ribose moiety from AdoMet to the 7-aminomethyl group of 7-deazaguanine (preQ1-tRNA) to give epoxyqueuosine (oQ-tRNA). This chain is S-adenosylmethionine:tRNA ribosyltransferase-isomerase, found in Acinetobacter baumannii (strain SDF).